The chain runs to 114 residues: Iron-sulfur cluster insertion protein ErpA (114 aa).

Iron-sulfur cluster contacts are provided by Cys42, Cys106, and Cys108.

It belongs to the HesB/IscA family. As to quaternary structure, homodimer. Requires iron-sulfur cluster as cofactor.

Required for insertion of 4Fe-4S clusters for at least IspG. This chain is Iron-sulfur cluster insertion protein ErpA, found in Edwardsiella ictaluri (strain 93-146).